A 231-amino-acid polypeptide reads, in one-letter code: Large ribosomal subunit protein uL1 (231 aa).

This sequence belongs to the universal ribosomal protein uL1 family. Part of the 50S ribosomal subunit.

Functionally, binds directly to 23S rRNA. The L1 stalk is quite mobile in the ribosome, and is involved in E site tRNA release. In terms of biological role, protein L1 is also a translational repressor protein, it controls the translation of the L11 operon by binding to its mRNA. This chain is Large ribosomal subunit protein uL1, found in Herminiimonas arsenicoxydans.